A 264-amino-acid chain; its full sequence is 4-oxalocrotonate decarboxylase (264 aa).

This sequence belongs to the hydratase/decarboxylase family.

The enzyme catalyses (3E)-2-oxohex-3-enedioate + H(+) = 2-oxopent-4-enoate + CO2. The protein operates within xenobiotic degradation; toluene degradation. This chain is 4-oxalocrotonate decarboxylase (xylI), found in Pseudomonas putida (Arthrobacter siderocapsulatus).